We begin with the raw amino-acid sequence, 253 residues long: MTLKRIFCAALALIVLQSVASAVDYCRLSCPEGRDHVGCRNAGFGAHCGSNPQTPKLHQEHIKMVLQKTNWLRGVVAEGSFCYPKAARMPVLVWDDDLANLASLHTKGCVTETNKCRSTERFHSPGQSSYEISGDTLPSAMDILNFALRDWYLQKDNLTRKDIGSYPAGEDKGLKNMANLISDKVTAIGCGLTHWEEGKLKRALFTCNFSSSNVPGHPIYQRGDNFATKCAKTHPYYKSLCNSDEHIKPNNNV.

A signal peptide spans 1–22 (MTLKRIFCAALALIVLQSVASA). Residues 66–209 (LQKTNWLRGV…LKRALFTCNF (144 aa)) enclose the SCP domain. Positions 222 to 224 (RGD) match the Cell attachment site motif.

This sequence belongs to the CRISP family. In terms of tissue distribution, expressed in salivary glands.

The protein localises to the secreted. Inhibits platelet aggregation induced by all agonists tested (ADP, arachidonic acid, the thromboxane A2 analog U46619, thrombin, and snake venom snaclecs (TMVA that activates platelet through GPIB, and stejnulxin that specifically acts through GPVI (GP6))). May act by competing with fibrinogen for binding to glycoprotein IIb/IIIa (ITGA2B/ITGB3). In Tabanus yao (Horsefly), this protein is Tabinhibitin 3.